A 306-amino-acid polypeptide reads, in one-letter code: tRNA dimethylallyltransferase (306 aa).

15-22 (GPTASGKS) lines the ATP pocket. 17 to 22 (TASGKS) lines the substrate pocket. The interaction with substrate tRNA stretch occupies residues 40–43 (DSMQ).

It belongs to the IPP transferase family. As to quaternary structure, monomer. Mg(2+) is required as a cofactor.

The catalysed reaction is adenosine(37) in tRNA + dimethylallyl diphosphate = N(6)-dimethylallyladenosine(37) in tRNA + diphosphate. Its function is as follows. Catalyzes the transfer of a dimethylallyl group onto the adenine at position 37 in tRNAs that read codons beginning with uridine, leading to the formation of N6-(dimethylallyl)adenosine (i(6)A). In Methylobacterium sp. (strain 4-46), this protein is tRNA dimethylallyltransferase.